A 711-amino-acid chain; its full sequence is MEALLEGMQRNGQGSSGFLTSCEAELQELMKQIDIMVAHKKAEWEGQTQALEACLGVREQELSSARAALEEKHKEVGKLRQQLEDMEAAKQDLVREYEQQLKKFQEELARLRRSYEKLQKKQLREAREEATKRQGDDQCEMSRLSRKLEEFRQKSLDWEKQRLLYQQQVASLEAQRKALAEQSELIQTQLASRKQILESVELASRSEIQHLTSKLERANDTICANELEVERLNMRVDDLTENNRMILEDQQRVAEELRQSKKMLEVLQDEKMELRATLQSQEDFIDSSKLHQEQLQKELARVTETLHTKEILIRALEERLQEKQLSSPGLEHILLQLDVAQEKEQHLQAEVTHLEDSLVSSNARCVQLSEELAESIKELQSMEEHRAESKVEIKKLKEQLSQAEQIHRGELEGMRKEILRLTQELHQRDITIASAGGSTSDLEQRLRMEIERAERKAVEHRMILVQLETLKLENRHLSEMLEKVELGVLEGKDATLRALSEDYVVELNKLKSENQQLKKDLSEAREKLELTTQSQPEGTAQQLQSEEPEPRDVQHRPTQESQHKQDEQTEKIHHKPDKTTQHHQRWKIQPLPAEIPVAVIPEASVLPTQTSRKSCVESPTLAAGALQGTDSLLLVLDDSKGFPDATSRQSNHEQESVPLCPLPTSSVGSVAARYLEEEELRSQHILECLDAHIEELKKESEKIVRHFGHQE.

2 coiled-coil regions span residues 23–192 (EAEL…QLAS) and 224–535 (ANEL…TQSQ). The tract at residues 529-585 (ELTTQSQPEGTAQQLQSEEPEPRDVQHRPTQESQHKQDEQTEKIHHKPDKTTQHHQR) is disordered. Residues 530–545 (LTTQSQPEGTAQQLQS) are compositionally biased toward polar residues. The segment covering 548 to 571 (PEPRDVQHRPTQESQHKQDEQTEK) has biased composition (basic and acidic residues). Residues 572–585 (IHHKPDKTTQHHQR) are compositionally biased toward basic residues.

The protein belongs to the CEP63 family.

It is found in the cytoplasm. The protein localises to the cytoskeleton. The protein resides in the microtubule organizing center. It localises to the centrosome. Its subcellular location is the centriole. Functionally, required for normal spindle assembly. Plays a key role in mother-centriole-dependent centriole duplication. Plays a role in DNA damage response. Following DNA damage, such as double-strand breaks (DSBs), is removed from centrosomes; this leads to the inactivation of spindle assembly and delay in mitotic progression. In Gallus gallus (Chicken), this protein is Centrosomal protein of 63 kDa (CEP63).